The following is a 396-amino-acid chain: Tryptophan synthase beta chain (396 aa).

N6-(pyridoxal phosphate)lysine is present on lysine 88.

The protein belongs to the TrpB family. As to quaternary structure, tetramer of two alpha and two beta chains. Requires pyridoxal 5'-phosphate as cofactor.

It catalyses the reaction (1S,2R)-1-C-(indol-3-yl)glycerol 3-phosphate + L-serine = D-glyceraldehyde 3-phosphate + L-tryptophan + H2O. The protein operates within amino-acid biosynthesis; L-tryptophan biosynthesis; L-tryptophan from chorismate: step 5/5. Its function is as follows. The beta subunit is responsible for the synthesis of L-tryptophan from indole and L-serine. This is Tryptophan synthase beta chain from Shewanella baltica (strain OS195).